Consider the following 135-residue polypeptide: Protein NrdI (135 aa).

The protein belongs to the NrdI family.

Functionally, probably involved in ribonucleotide reductase function. The protein is Protein NrdI of Pectobacterium atrosepticum (strain SCRI 1043 / ATCC BAA-672) (Erwinia carotovora subsp. atroseptica).